The chain runs to 528 residues: Glycerol kinase 5 (528 aa).

Serine 28 and serine 29 together coordinate ATP. The glycerol site is built by arginine 98, aspartate 275, and glutamine 276. Positions 297, 340, and 440 each coordinate ATP.

The protein belongs to the FGGY kinase family.

The protein resides in the cytoplasm. The enzyme catalyses glycerol + ATP = sn-glycerol 3-phosphate + ADP + H(+). It functions in the pathway polyol metabolism; glycerol degradation via glycerol kinase pathway; sn-glycerol 3-phosphate from glycerol: step 1/1. In terms of biological role, skin-specific kinase that plays a key role in glycerol metabolism, catalyzing its phosphorylation to produce sn-glycerol 3-phosphate. Involved in skin-specific regulation of sterol regulatory element-binding protein (SREBP) processing and lipid biosynthesis. The chain is Glycerol kinase 5 (GK5) from Bos taurus (Bovine).